Here is a 901-residue protein sequence, read N- to C-terminus: Protein translocase subunit SecA 1 (901 aa).

ATP contacts are provided by residues glutamine 87, 105–109 (GEGKT), and aspartate 500. A disordered region spans residues 847 to 901 (LNHPESGSWGGEGEGPSSEGAPHLPFKRDGEKVGRNQACPCGSGKKYKQCCGKLS). The Zn(2+) site is built by cysteine 885, cysteine 887, cysteine 896, and cysteine 897.

This sequence belongs to the SecA family. In terms of assembly, monomer and homodimer. Part of the essential Sec protein translocation apparatus which comprises SecA, SecYEG and auxiliary proteins SecDF-YajC and YidC. Zn(2+) is required as a cofactor.

The protein localises to the cell inner membrane. The protein resides in the cytoplasm. The enzyme catalyses ATP + H2O + cellular proteinSide 1 = ADP + phosphate + cellular proteinSide 2.. In terms of biological role, part of the Sec protein translocase complex. Interacts with the SecYEG preprotein conducting channel. Has a central role in coupling the hydrolysis of ATP to the transfer of proteins into and across the cell membrane, serving both as a receptor for the preprotein-SecB complex and as an ATP-driven molecular motor driving the stepwise translocation of polypeptide chains across the membrane. In Magnetococcus marinus (strain ATCC BAA-1437 / JCM 17883 / MC-1), this protein is Protein translocase subunit SecA 1.